The chain runs to 175 residues: MNIKRNKPNILITGTPGTGKTSLAGVIASNNEMNHIDISSAVKEKELHDGWDSEFQCYILDEDKVCDEFEDVMVKGGNVVDHHGCEWFPERWFDLVIVLRTDIKILNDRLEKRNYNQHKITNNLDCEIMQVILDEARNSYKQEIVVELPSTTLEDNENNQNFISQWIQNWYEKNN.

Residues Gly-17, Gly-19, Lys-20, Thr-21, and Ser-22 each contribute to the ATP site. Residues 37–60 (DISSAVKEKELHDGWDSEFQCYIL) form an NMPbind region. The interval 112 to 122 (KRNYNQHKITN) is LID. Residue Arg-113 coordinates ATP.

It belongs to the adenylate kinase family. AK6 subfamily. As to quaternary structure, monomer and homodimer. Interacts with small ribosomal subunit protein uS11. Not a structural component of 43S pre-ribosomes, but transiently interacts with them by binding to uS11.

It localises to the cytoplasm. The protein localises to the nucleus. The catalysed reaction is AMP + ATP = 2 ADP. The enzyme catalyses ATP + H2O = ADP + phosphate + H(+). Functionally, broad-specificity nucleoside monophosphate (NMP) kinase that catalyzes the reversible transfer of the terminal phosphate group between nucleoside triphosphates and monophosphates. Also has ATPase activity. Involved in the late cytoplasmic maturation steps of the 40S ribosomal particles, specifically 18S rRNA maturation. While NMP activity is not required for ribosome maturation, ATPase activity is. Associates transiently with small ribosomal subunit protein uS11. ATP hydrolysis breaks the interaction with uS11. May temporarily remove uS11 from the ribosome to enable a conformational change of the ribosomal RNA that is needed for the final maturation step of the small ribosomal subunit. Its NMP activity may have a role in nuclear energy homeostasis. In Dictyostelium discoideum (Social amoeba), this protein is Adenylate kinase isoenzyme 6 homolog.